The chain runs to 492 residues: ATP synthase subunit beta, chloroplastic (492 aa).

Residue 170–177 (GGAGVGKT) coordinates ATP.

It belongs to the ATPase alpha/beta chains family. As to quaternary structure, F-type ATPases have 2 components, CF(1) - the catalytic core - and CF(0) - the membrane proton channel. CF(1) has five subunits: alpha(3), beta(3), gamma(1), delta(1), epsilon(1). CF(0) has four main subunits: a(1), b(1), b'(1) and c(9-12).

Its subcellular location is the plastid. The protein resides in the chloroplast thylakoid membrane. The catalysed reaction is ATP + H2O + 4 H(+)(in) = ADP + phosphate + 5 H(+)(out). Its function is as follows. Produces ATP from ADP in the presence of a proton gradient across the membrane. The catalytic sites are hosted primarily by the beta subunits. The polypeptide is ATP synthase subunit beta, chloroplastic (Pinus thunbergii (Japanese black pine)).